A 323-amino-acid chain; its full sequence is C-type lectin domain family 11 member A (323 aa).

The N-terminal stretch at 1–21 is a signal peptide; it reads MQAAWLLGALVVPQLLGFGHG. 2 disordered regions span residues 55–106 and 272–295; these read LGLP…TPED and LGAQ…TLEN. The short motif at 61 to 63 is the Cell attachment site element; sequence RGD. Acidic residues predominate over residues 74–90; the sequence is EDWEMEEDQGEEEEEEA. The C-type lectin domain maps to 183 to 320; sequence LGHKCFLLSR…CQRRLYYVCE (138 aa). 2 disulfides stabilise this stretch: cysteine 204-cysteine 319 and cysteine 296-cysteine 311.

O-glycosylated. Probably sulfated on the O-glycans. As to expression, expressed in skeletal tissues including bone marrow, chondrocytes, primary ossification center-associated cells, the perichondrium and periosteum. Lower levels of expression were detected in spleen, thymus, appendix and fetal liver.

It is found in the cytoplasm. Its subcellular location is the secreted. In terms of biological role, promotes osteogenesis by stimulating the differentiation of mesenchymal progenitors into mature osteoblasts. Important for repair and maintenance of adult bone. The chain is C-type lectin domain family 11 member A (CLEC11A) from Homo sapiens (Human).